A 429-amino-acid polypeptide reads, in one-letter code: Methylenetetrahydrofolate--tRNA-(uracil-5-)-methyltransferase TrmFO (429 aa).

7-12 (GAGLAG) provides a ligand contact to FAD.

This sequence belongs to the MnmG family. TrmFO subfamily. FAD serves as cofactor.

It localises to the cytoplasm. It carries out the reaction uridine(54) in tRNA + (6R)-5,10-methylene-5,6,7,8-tetrahydrofolate + NADH + H(+) = 5-methyluridine(54) in tRNA + (6S)-5,6,7,8-tetrahydrofolate + NAD(+). The enzyme catalyses uridine(54) in tRNA + (6R)-5,10-methylene-5,6,7,8-tetrahydrofolate + NADPH + H(+) = 5-methyluridine(54) in tRNA + (6S)-5,6,7,8-tetrahydrofolate + NADP(+). Its function is as follows. Catalyzes the folate-dependent formation of 5-methyl-uridine at position 54 (M-5-U54) in all tRNAs. This is Methylenetetrahydrofolate--tRNA-(uracil-5-)-methyltransferase TrmFO from Thermosipho melanesiensis (strain DSM 12029 / CIP 104789 / BI429).